The primary structure comprises 1146 residues: Inositol hexakisphosphate and diphosphoinositol-pentakisphosphate kinase (1146 aa).

Positions 1–33 (MSGIKKEPIESDEVPQQETKNNLPSAPSEMSPL) are disordered. The segment covering 16 to 25 (QQETKNNLPS) has biased composition (polar residues). Residues Ser31, Ser54, and Ser77 each carry the phosphoserine modification. The tract at residues 93 to 185 (TALGNGNNTN…STSHPKPRLP (93 aa)) is disordered. Over residues 96-106 (GNGNNTNTVTT) the composition is skewed to low complexity. The span at 110–120 (KKADSESKSEA) shows a compositional bias: basic and acidic residues. Residues 125–144 (LSNSNIVNDADNINSISKTG) show a composition bias toward polar residues. The segment covering 164-178 (SVPTSSASSRKSSTS) has biased composition (low complexity). Residue 197 to 198 (AK) participates in substrate binding. ATP-binding positions include Arg278, Lys351, His358, Arg377, 402–405 (EQFM), and 412–414 (DVK). Substrate is bound at residue 377–378 (RK). Residues Lys414 and Arg428 each coordinate substrate. ATP contacts are provided by residues Ser430, Asp475, and 487 to 489 (DVN). 492 to 495 (SFVK) provides a ligand contact to substrate. A polyphosphoinositide-binding domain region spans residues 530 to 597 (REEKEQKWVF…VLQALRIALD (68 aa)). Ser895 and Ser1107 each carry phosphoserine. The interval 1106–1146 (TSPNLSFQKRKTRRKSVSVEKLKRPASSGSSSSTSVNKTLD) is disordered.

This sequence belongs to the histidine acid phosphatase family. VIP1 subfamily.

It localises to the cytoplasm. It is found in the cytoskeleton. The enzyme catalyses 1D-myo-inositol hexakisphosphate + ATP = 1-diphospho-1D-myo-inositol 2,3,4,5,6-pentakisphosphate + ADP. It catalyses the reaction 5-diphospho-1D-myo-inositol 1,2,3,4,6-pentakisphosphate + ATP + H(+) = 1,5-bis(diphospho)-1D-myo-inositol 2,3,4,6-tetrakisphosphate + ADP. In terms of biological role, bifunctional inositol kinase that acts in concert with the IP6K kinases to synthesize the diphosphate group-containing inositol pyrophosphates diphosphoinositol pentakisphosphate, PP-InsP5, and bis-diphosphoinositol tetrakisphosphate, (PP)2-InsP4. Phosphorylates inositol hexakisphosphate (InsP6) at position 1 to produce PP-InsP5 which is in turn phosphorylated by IP6Ks to produce (PP)2-InsP4. Alternatively, phosphorylates PP-InsP5 at position 1, produced by IP6Ks from InsP6, to produce (PP)2-InsP4. Required for maintaining cellular integrity, normal growth and interactions with the ARP complex. Acts as a regulator of the PHO80-PHO85 cyclin/cyclin-dependent kinase (CDK) complex, thereby regulating signaling of phosphate availability. Required for the function of the cortical actin cytoskeleton, possibly by participating in correct F-actin localization and ensuring polarized growth. Regulates polarized growth and modulates interphase microtubule cytoskeleton. Regulates microtubule dynamics without the requirement of microtubule plus-end tracking protein Mal3. Required for growth zone selection. The sequence is that of Inositol hexakisphosphate and diphosphoinositol-pentakisphosphate kinase from Saccharomyces cerevisiae (strain ATCC 204508 / S288c) (Baker's yeast).